The chain runs to 83 residues: Small ribosomal subunit protein bS16 (83 aa).

Belongs to the bacterial ribosomal protein bS16 family.

The protein is Small ribosomal subunit protein bS16 of Pseudomonas entomophila (strain L48).